The sequence spans 634 residues: MANPDVENLFSLCDSESKGFLTMEDLKKVCPQLDDNDLRFIFNELDRDGSGKIEKMEFLQGFQETVQHGESRGLNGMQRRASVAFDDGGPVFRRDELVFESESDSSSRPAIRVYDEEHYHSESDTNINIDFSVPCQEEVLVLYEQLQSSGVPALLRKFERVVGSFHKELSEKKHENERLQRIYASEREMYNRRMEEMESEVDQQLELIEMKARQEERERLTKEKEEMRERMSEEMSEMRTNIERLQRMEKVLERENERLNHQKDLSDKLKVVNEENNDLRQNLAENHLELAMIKSELAQVRADFDQKQDELSARRDQASHATEESESVRKQLQLLFDANRKLHETNESLRDALDSRASVLRQFNLRTPSPGLINSNRNSVENFQTSTNMFKSVPLHAISDEEPDPETSLILDDAHSLQGMDIAEGLVGLNDANGPAERTFRIVMCGDAAVGKSSFVMRVIRRQFTNQLPSTLGVDFHVKTVNVDGRNVALQLWDTAGQERFRSLCKSYFRRADGAILVYDVCAEHSFLRVRDWIETIKESTERSIPIILVGNKVDMRLQTPGAVAKTDGASMAAAMGVLFMETSALDGSNIDNAMLALTRELMAVEDVEIRSTGVVLNPAATKKGGCFSKCRGS.

2 consecutive EF-hand domains span residues 5–33 (DVENLFSLCDSESKGFLTMEDLKKVCPQL) and 33–68 (LDDNDLRFIFNELDRDGSGKIEKMEFLQGFQETVQH). Residues Asp-46, Asp-48, Ser-50, Lys-52, and Glu-57 each coordinate Ca(2+). The stretch at 169–310 (LSEKKHENER…RADFDQKQDE (142 aa)) forms a coiled coil. 2 disordered regions span residues 216 to 237 (ERERLTKEKEEMRERMSEEMSE) and 308 to 328 (QDELSARRDQASHATEESESV). Residues 449 to 454 (AVGKSS), 552 to 555 (NKVD), and 585 to 586 (AL) contribute to the GTP site. A propeptide spans 632–634 (RGS) (removed in mature form).

This sequence belongs to the small GTPase superfamily. Rab family. As to quaternary structure, homodimer.

Its subcellular location is the cytoplasm. It is found in the perinuclear region. In terms of biological role, binds GTP and GDP. Plays a role in uterine seam cell development. The polypeptide is Ras and EF-hand domain-containing protein homolog (Caenorhabditis briggsae).